The sequence spans 367 residues: Methylthioribose-1-phosphate isomerase (367 aa).

Substrate-binding positions include 48–50 (RGA), Arg91, and Gln215. The active-site Proton donor is Asp256. A substrate-binding site is contributed by 266–267 (NK).

It belongs to the eIF-2B alpha/beta/delta subunits family. MtnA subfamily.

It catalyses the reaction 5-(methylsulfanyl)-alpha-D-ribose 1-phosphate = 5-(methylsulfanyl)-D-ribulose 1-phosphate. It functions in the pathway amino-acid biosynthesis; L-methionine biosynthesis via salvage pathway; L-methionine from S-methyl-5-thio-alpha-D-ribose 1-phosphate: step 1/6. In terms of biological role, catalyzes the interconversion of methylthioribose-1-phosphate (MTR-1-P) into methylthioribulose-1-phosphate (MTRu-1-P). In Syntrophus aciditrophicus (strain SB), this protein is Methylthioribose-1-phosphate isomerase.